The following is a 724-amino-acid chain: Probable serine/threonine-protein kinase KKQ8 (724 aa).

2 disordered regions span residues 1-81 (MVMQ…RQRS) and 93-188 (HPFR…KDIL). Serine 19 bears the Phosphoserine mark. Low complexity predominate over residues 45 to 54 (PYRSSSTSPK). A compositionally biased stretch (polar residues) spans 95-106 (FRQTGSGASNSP). Positions 143–162 (RSSSVSSCDSSNGTTSSSDS) are enriched in low complexity. 3 positions are modified to phosphoserine: serine 232, serine 238, and serine 241. 2 stretches are compositionally biased toward polar residues: residues 318–329 (NASSLLPNVEKS) and 338–351 (GQSP…SPTQ). The tract at residues 318–355 (NASSLLPNVEKSQTNHEKRTGQSPNDSNRSSPTQGRED) is disordered. The Protein kinase domain occupies 412-712 (GHPVGLVGAG…VGKLLDMQWM (301 aa)). ATP contacts are provided by residues 418–426 (VGAGAYGEV) and lysine 455. The active-site Proton acceptor is the aspartate 563.

Belongs to the protein kinase superfamily. CAMK Ser/Thr protein kinase family. NPR/HAL subfamily. HAL5 sub-subfamily.

Its subcellular location is the cytoplasm. It catalyses the reaction L-seryl-[protein] + ATP = O-phospho-L-seryl-[protein] + ADP + H(+). It carries out the reaction L-threonyl-[protein] + ATP = O-phospho-L-threonyl-[protein] + ADP + H(+). This Saccharomyces cerevisiae (strain YJM789) (Baker's yeast) protein is Probable serine/threonine-protein kinase KKQ8 (KKQ8).